The primary structure comprises 368 residues: uncharacterized protein (368 aa).

It belongs to the Gfo/Idh/MocA family.

This is an uncharacterized protein from Schizosaccharomyces pombe (strain 972 / ATCC 24843) (Fission yeast).